The following is a 216-amino-acid chain: uncharacterized protein (216 aa).

Belongs to the channel forming colicin family.

This is an uncharacterized protein from Escherichia coli.